We begin with the raw amino-acid sequence, 205 residues long: Proteasome subunit beta type-3 (205 aa).

The protein belongs to the peptidase T1B family. The 26S proteasome consists of a 20S proteasome core and two 19S regulatory subunits. The 20S proteasome core is composed of 28 subunits that are arranged in four stacked rings, resulting in a barrel-shaped structure. The two end rings are each formed by seven alpha subunits, and the two central rings are each formed by seven beta subunits. The catalytic chamber with the active sites is on the inside of the barrel.

The protein localises to the cytoplasm. It localises to the nucleus. In terms of biological role, non-catalytic component of the proteasome, a multicatalytic proteinase complex which is characterized by its ability to cleave peptides with Arg, Phe, Tyr, Leu, and Glu adjacent to the leaving group at neutral or slightly basic pH. The proteasome has an ATP-dependent proteolytic activity. In Dictyostelium discoideum (Social amoeba), this protein is Proteasome subunit beta type-3 (psmB3).